The chain runs to 465 residues: L-seryl-tRNA(Sec) selenium transferase (465 aa).

Lys-294 bears the N6-(pyridoxal phosphate)lysine mark.

It belongs to the SelA family. It depends on pyridoxal 5'-phosphate as a cofactor.

It localises to the cytoplasm. The catalysed reaction is L-seryl-tRNA(Sec) + selenophosphate + H(+) = L-selenocysteinyl-tRNA(Sec) + phosphate. Its pathway is aminoacyl-tRNA biosynthesis; selenocysteinyl-tRNA(Sec) biosynthesis; selenocysteinyl-tRNA(Sec) from L-seryl-tRNA(Sec) (bacterial route): step 1/1. Its function is as follows. Converts seryl-tRNA(Sec) to selenocysteinyl-tRNA(Sec) required for selenoprotein biosynthesis. The polypeptide is L-seryl-tRNA(Sec) selenium transferase (Mannheimia succiniciproducens (strain KCTC 0769BP / MBEL55E)).